The primary structure comprises 65 residues: Large ribosomal subunit protein bL35c (65 aa).

The tract at residues 18 to 50 is disordered; the sequence is SSGKILRHKASKSHLLQKKSSKHRRHLSSTCQV. The span at 22-44 shows a compositional bias: basic residues; that stretch reads ILRHKASKSHLLQKKSSKHRRHL.

The protein belongs to the bacterial ribosomal protein bL35 family.

Its subcellular location is the plastid. The protein localises to the chloroplast. The protein is Large ribosomal subunit protein bL35c of Porphyra purpurea (Red seaweed).